Consider the following 114-residue polypeptide: T cell receptor beta variable 4-1 (114 aa).

A signal peptide spans 1–21; sequence MGCRLLCCAVLCLLGAVPIDT. Residues 22 to 114 enclose the Ig-like domain; it reads EVTQTPKHLV…SALYLCASSQ (93 aa). Cysteines 42 and 110 form a disulfide. Residues asparagine 76 and asparagine 89 are each glycosylated (N-linked (GlcNAc...) asparagine).

As to quaternary structure, alpha-beta TR is a heterodimer composed of an alpha and beta chain; disulfide-linked. The alpha-beta TR is associated with the transmembrane signaling CD3 coreceptor proteins to form the TR-CD3 (TcR or TCR). The assembly of alpha-beta TR heterodimers with CD3 occurs in the endoplasmic reticulum where a single alpha-beta TR heterodimer associates with one CD3D-CD3E heterodimer, one CD3G-CD3E heterodimer and one CD247 homodimer forming a stable octameric structure. CD3D-CD3E and CD3G-CD3E heterodimers preferentially associate with TR alpha and TR beta chains, respectively. The association of the CD247 homodimer is the last step of TcR assembly in the endoplasmic reticulum and is required for transport to the cell surface.

The protein localises to the cell membrane. V region of the variable domain of T cell receptor (TR) beta chain that participates in the antigen recognition. Alpha-beta T cell receptors are antigen specific receptors which are essential to the immune response and are present on the cell surface of T lymphocytes. Recognize peptide-major histocompatibility (MH) (pMH) complexes that are displayed by antigen presenting cells (APC), a prerequisite for efficient T cell adaptive immunity against pathogens. Binding of alpha-beta TR to pMH complex initiates TR-CD3 clustering on the cell surface and intracellular activation of LCK that phosphorylates the ITAM motifs of CD3G, CD3D, CD3E and CD247 enabling the recruitment of ZAP70. In turn ZAP70 phosphorylates LAT, which recruits numerous signaling molecules to form the LAT signalosome. The LAT signalosome propagates signal branching to three major signaling pathways, the calcium, the mitogen-activated protein kinase (MAPK) kinase and the nuclear factor NF-kappa-B (NF-kB) pathways, leading to the mobilization of transcription factors that are critical for gene expression and essential for T cell growth and differentiation. The T cell repertoire is generated in the thymus, by V-(D)-J rearrangement. This repertoire is then shaped by intrathymic selection events to generate a peripheral T cell pool of self-MH restricted, non-autoaggressive T cells. Post-thymic interaction of alpha-beta TR with the pMH complexes shapes TR structural and functional avidity. The polypeptide is T cell receptor beta variable 4-1 (Homo sapiens (Human)).